We begin with the raw amino-acid sequence, 284 residues long: L-ribulose-5-phosphate 3-epimerase UlaE (284 aa).

The protein belongs to the L-ribulose-5-phosphate 3-epimerase family.

It catalyses the reaction L-ribulose 5-phosphate = L-xylulose 5-phosphate. It participates in cofactor degradation; L-ascorbate degradation; D-xylulose 5-phosphate from L-ascorbate: step 3/4. Functionally, catalyzes the isomerization of L-xylulose-5-phosphate to L-ribulose-5-phosphate. Is involved in the anaerobic L-ascorbate utilization. This is L-ribulose-5-phosphate 3-epimerase UlaE from Salmonella dublin (strain CT_02021853).